Reading from the N-terminus, the 540-residue chain is Raucaffricine-O-beta-D-glucosidase (540 aa).

A beta-D-glucoside-binding positions include Q36, H140, and 185–186; that span reads NE. Residue E186 is the Proton donor of the active site. C221 and C230 are joined by a disulfide. A beta-D-glucoside is bound by residues Y347, E420, W469, 476–477, and F485; that span reads EW. The Nucleophile role is filled by E420.

This sequence belongs to the glycosyl hydrolase 1 family.

The enzyme catalyses raucaffricine + H2O = vomilenine + D-glucose. It catalyses the reaction vomilenine + UDP-alpha-D-glucose = raucaffricine + UDP + H(+). Its function is as follows. Glucosidase specifically involved in alkaloid biosynthesis leading to the accumulation of several alkaloids, including ajmaline, an important plant-derived pharmaceutical used in the treatment of heart disorders. In Rauvolfia serpentina (Serpentine wood), this protein is Raucaffricine-O-beta-D-glucosidase.